Reading from the N-terminus, the 477-residue chain is Homeobox protein Meis2 (477 aa).

The tract at residues 71–191 (DALKRDKDAI…KMPIDLVIDE (121 aa)) is required for interaction with PBX1. Residues 110–193 (GGDVCSSDSF…PIDLVIDERD (84 aa)) enclose the MEIS N-terminal domain. Basic and acidic residues predominate over residues 193-203 (DGSSKSDHEEL). A disordered region spans residues 193–283 (DGSSKSDHEE…KKRQKKRGIF (91 aa)). Composition is skewed to polar residues over residues 204–217 (SGSSTNLADHNPSS) and 239–251 (GHASQSGDNSSEQ). The segment at residues 276 to 338 (RQKKRGIFPK…NARRRIVQPM (63 aa)) is a DNA-binding region (homeobox; TALE-type). Residues 299–333 (LTHPYPSEEQKKQLAQDTGLTILQVNNWFINARRR) are interaction with DNA. A transcriptional activation domain region spans residues 340–477 (DQSNRAGFLL…GGQVMDIHAQ (138 aa)).

It belongs to the TALE/MEIS homeobox family. Monomer and homodimer. Heterodimer with HOXB13. Isoform Meis2A interacts with TLX1. Isoform Meis2B interacts with HOXA13 and PBX1 isoform PBX1b. Isoform Meis2D interacts with SP1, SP3 and KLF4. Isoform Meis2D interacts with PBX1 isoform PBX1a; the interaction partially relieves MEIS2 autoinhibition. Isoform Meis2B is part of a PDX1:PBX1b:MEIS2b complex; Meis2B is recruited by PBX1b and can be replaced by isoform Meis2D in a small fraction of complexes. Can form trimeric complexes including HOXB8 and PBX2 or PBX3. Displays spatially restricted expression patterns in the developing nervous system, limbs, face, and in various viscera. In adult, it is mainly expressed in the brain and female genital tract, with a different distribution of the alternative splice forms in these organs. Lower expression in lung and only basal level in heart, liver, kidney, spleen, and testis. Expressed in pancreatic islets (beta-cells only).

It is found in the nucleus. The protein localises to the cytoplasm. The protein resides in the perinuclear region. Functionally, involved in transcriptional regulation. Binds to HOX or PBX proteins to form dimers, or to a DNA-bound dimer of PBX and HOX proteins and thought to have a role in stabilization of the homeoprotein-DNA complex. Isoform Meis2B is required for the activity of a PDX1:PBX1b:MEIS2b complex in pancreatic acinar cells involved in the transcriptional activation of the ELA1 enhancer; the complex binds to the enhancer B element and cooperates with the transcription factor 1 complex (PTF1) bound to the enhancer A element; MEIS2 is not involved in complex DNA-binding. Probably in complex with PBX1, is involved in transcriptional regulation by KLF4. Isoforms Meis2B and Meis2D can bind to a EPHA8 promoter sequence containing the DNA motif 5'-CGGTCA-3'; in cooperation with a PBX protein (such as PBX2) is proposed to be involved in the transcriptional activation of EPHA8 in the developing midbrain. May be involved in regulation of myeloid differentiation. Can bind to the DNA sequence 5'-TGACAG-3'in the activator ACT sequence of the D(1A) dopamine receptor (DRD1) promoter and activate DRD1 transcription. The polypeptide is Homeobox protein Meis2 (Meis2) (Mus musculus (Mouse)).